A 152-amino-acid chain; its full sequence is Interleukin-3 (152 aa).

The signal sequence occupies residues 1–19 (MSCLPVLLLLQLLVSPGLQ). Residues N34 and N89 are each glycosylated (N-linked (GlcNAc...) asparagine). C35 and C103 are joined by a disulfide.

This sequence belongs to the IL-3 family. As to quaternary structure, monomer. In terms of tissue distribution, activated T-cells, mast cells, natural killer cells.

The protein resides in the secreted. In terms of biological role, granulocyte/macrophage colony-stimulating factors are cytokines that act in hematopoiesis by controlling the production, differentiation, and function of 2 related white cell populations of the blood, the granulocytes and the monocytes-macrophages. Its function is as follows. This CSF induces granulocytes, macrophages, mast cells, stem cells, erythroid cells, eosinophils and megakaryocytes. The chain is Interleukin-3 (IL3) from Hylobates lar (Lar gibbon).